The following is a 172-amino-acid chain: uncharacterized protein (172 aa).

This is an uncharacterized protein from Rattus norvegicus (Rat).